The chain runs to 719 residues: Protein psiJ (719 aa).

Positions Met-1–Gly-21 are cleaved as a signal peptide. Over Asp-22–Gly-653 the chain is Extracellular. N-linked (GlcNAc...) asparagine glycans are attached at residues Asn-46, Asn-59, Asn-86, Asn-113, Asn-301, Asn-372, Asn-435, Asn-457, Asn-562, and Asn-628. One can recognise a PA14 domain in the interval Gln-112–Thr-260. A helical membrane pass occupies residues Val-654 to Ala-674. The Cytoplasmic segment spans residues Leu-675 to Thr-719.

The protein belongs to the prespore-cell-inducing factor family.

The protein localises to the membrane. This is Protein psiJ (psiJ) from Dictyostelium discoideum (Social amoeba).